Here is a 429-residue protein sequence, read N- to C-terminus: ATP-dependent RNA helicase RhlB (429 aa).

Positions 9 to 37 (EKFAQMGLEPEVLAGLESKGFHYCTPIQA) match the Q motif motif. Residues 40–219 (LPLLVEGHDL…YEHMNHPEHV (180 aa)) form the Helicase ATP-binding domain. An ATP-binding site is contributed by 53-60 (AQTGTGKT). A DEAD box motif is present at residues 165-168 (DEAD). Residues 243 to 390 (KMLLLLSLME…VSKYDREALL (148 aa)) form the Helicase C-terminal domain. The disordered stretch occupies residues 395 to 429 (APKRVVRNRQPVNRNMRDRQGGGNSNNRRRPPRKS).

The protein belongs to the DEAD box helicase family. RhlB subfamily. In terms of assembly, component of the RNA degradosome, which is a multiprotein complex involved in RNA processing and mRNA degradation.

It localises to the cytoplasm. The catalysed reaction is ATP + H2O = ADP + phosphate + H(+). Its function is as follows. DEAD-box RNA helicase involved in RNA degradation. Has RNA-dependent ATPase activity and unwinds double-stranded RNA. This chain is ATP-dependent RNA helicase RhlB, found in Aeromonas salmonicida (strain A449).